An 894-amino-acid chain; its full sequence is Protein SEY1 (894 aa).

The interval 1–64 (MGLDVDSVPI…PRALEPAQVT (64 aa)) is disordered. The Cytoplasmic portion of the chain corresponds to 1–768 (MGLDVDSVPI…KRGTVSSMSQ (768 aa)). The span at 9–24 (PIAEAAAPSSMAATEP) shows a compositional bias: low complexity. The span at 40 to 53 (APMNTDSSRETMPT) shows a compositional bias: polar residues. Residues 137–359 (GFGYDICAVL…DESYVFKTEY (223 aa)) enclose the GB1/RHD3-type G domain. 147–154 (GSQSTGKS) is a binding site for GTP. The stretch at 536-559 (KVDDERAQLLDELHTLARTLRANE) forms a coiled coil. Residues 769-789 (VPIWMYGVLVVLGWNEAMAVL) form a helical membrane-spanning segment. Residues 790 to 792 (RNP) are Lumenal-facing. A helical membrane pass occupies residues 793 to 813 (VYFTLLCMVLATAYVIWRLNL). At 814-894 (GTPVLALASG…DSHPRLPASF (81 aa)) the chain is on the cytoplasmic side. Residues 841–894 (DGTPPSANRAREYRVPSGSTAHVSEKTPHRPLTTSGAAEADTVEDSHPRLPASF) are disordered.

It belongs to the TRAFAC class dynamin-like GTPase superfamily. GB1/RHD3 GTPase family. RHD3 subfamily.

Its subcellular location is the endoplasmic reticulum membrane. In terms of biological role, cooperates with the reticulon proteins and tubule-shaping DP1 family proteins to generate and maintain the structure of the tubular endoplasmic reticulum network. Has GTPase activity, which is required for its function in ER organization. This Malassezia globosa (strain ATCC MYA-4612 / CBS 7966) (Dandruff-associated fungus) protein is Protein SEY1.